Here is a 156-residue protein sequence, read N- to C-terminus: Ribosomal RNA large subunit methyltransferase H (156 aa).

S-adenosyl-L-methionine is bound by residues Leu72, Gly104, and 123–128; that span reads LSKMTL.

This sequence belongs to the RNA methyltransferase RlmH family. Homodimer.

It localises to the cytoplasm. The enzyme catalyses pseudouridine(1915) in 23S rRNA + S-adenosyl-L-methionine = N(3)-methylpseudouridine(1915) in 23S rRNA + S-adenosyl-L-homocysteine + H(+). Functionally, specifically methylates the pseudouridine at position 1915 (m3Psi1915) in 23S rRNA. This Maridesulfovibrio salexigens (strain ATCC 14822 / DSM 2638 / NCIMB 8403 / VKM B-1763) (Desulfovibrio salexigens) protein is Ribosomal RNA large subunit methyltransferase H.